Consider the following 549-residue polypeptide: Dihydroxy-acid dehydratase (549 aa).

Residue Asp-78 coordinates Mg(2+). A [2Fe-2S] cluster-binding site is contributed by Cys-119. Asp-120 and Lys-121 together coordinate Mg(2+). N6-carboxylysine is present on Lys-121. Cys-191 is a [2Fe-2S] cluster binding site. Mg(2+) is bound at residue Glu-441. Residue Ser-466 is the Proton acceptor of the active site.

It belongs to the IlvD/Edd family. In terms of assembly, homodimer. [2Fe-2S] cluster serves as cofactor. Mg(2+) is required as a cofactor.

It catalyses the reaction (2R)-2,3-dihydroxy-3-methylbutanoate = 3-methyl-2-oxobutanoate + H2O. It carries out the reaction (2R,3R)-2,3-dihydroxy-3-methylpentanoate = (S)-3-methyl-2-oxopentanoate + H2O. Its pathway is amino-acid biosynthesis; L-isoleucine biosynthesis; L-isoleucine from 2-oxobutanoate: step 3/4. It functions in the pathway amino-acid biosynthesis; L-valine biosynthesis; L-valine from pyruvate: step 3/4. Functions in the biosynthesis of branched-chain amino acids. Catalyzes the dehydration of (2R,3R)-2,3-dihydroxy-3-methylpentanoate (2,3-dihydroxy-3-methylvalerate) into 2-oxo-3-methylpentanoate (2-oxo-3-methylvalerate) and of (2R)-2,3-dihydroxy-3-methylbutanoate (2,3-dihydroxyisovalerate) into 2-oxo-3-methylbutanoate (2-oxoisovalerate), the penultimate precursor to L-isoleucine and L-valine, respectively. This is Dihydroxy-acid dehydratase from Methanosphaera stadtmanae (strain ATCC 43021 / DSM 3091 / JCM 11832 / MCB-3).